A 289-amino-acid polypeptide reads, in one-letter code: Homoserine kinase (289 aa).

Residue 79–89 participates in ATP binding; that stretch reads PLARGLGSSSS.

This sequence belongs to the GHMP kinase family. Homoserine kinase subfamily.

It localises to the cytoplasm. The catalysed reaction is L-homoserine + ATP = O-phospho-L-homoserine + ADP + H(+). Its pathway is amino-acid biosynthesis; L-threonine biosynthesis; L-threonine from L-aspartate: step 4/5. Catalyzes the ATP-dependent phosphorylation of L-homoserine to L-homoserine phosphate. The polypeptide is Homoserine kinase (Streptococcus pneumoniae serotype 2 (strain D39 / NCTC 7466)).